Here is a 382-residue protein sequence, read N- to C-terminus: Lipid-A-disaccharide synthase (382 aa).

Belongs to the LpxB family.

The catalysed reaction is 2-N,3-O-bis[(3R)-3-hydroxytetradecanoyl]-alpha-D-glucosaminyl 1-phosphate + UDP-2-N,3-O-bis[(3R)-3-hydroxytetradecanoyl]-alpha-D-glucosamine = lipid A disaccharide (E. coli) + UDP + H(+). The enzyme catalyses a lipid X + a UDP-2-N,3-O-bis[(3R)-3-hydroxyacyl]-alpha-D-glucosamine = a lipid A disaccharide + UDP + H(+). It functions in the pathway glycolipid biosynthesis; lipid IV(A) biosynthesis; lipid IV(A) from (3R)-3-hydroxytetradecanoyl-[acyl-carrier-protein] and UDP-N-acetyl-alpha-D-glucosamine: step 5/6. Functionally, condensation of UDP-2,3-diacylglucosamine and 2,3-diacylglucosamine-1-phosphate to form lipid A disaccharide, a precursor of lipid A, a phosphorylated glycolipid that anchors the lipopolysaccharide to the outer membrane of the cell. The protein is Lipid-A-disaccharide synthase of Enterobacter sp. (strain 638).